The sequence spans 88 residues: Cell division topological specificity factor (88 aa).

It belongs to the MinE family.

Its function is as follows. Prevents the cell division inhibition by proteins MinC and MinD at internal division sites while permitting inhibition at polar sites. This ensures cell division at the proper site by restricting the formation of a division septum at the midpoint of the long axis of the cell. The sequence is that of Cell division topological specificity factor from Shewanella denitrificans (strain OS217 / ATCC BAA-1090 / DSM 15013).